Reading from the N-terminus, the 443-residue chain is D-alanyl-D-alanine carboxypeptidase DacA (443 aa).

Positions 1–31 (MNIKKCKQLLMSLVVLTLAVTCLAPMSKAKA) are cleaved as a signal peptide. The active-site Acyl-ester intermediate is Ser67. Residue Lys70 is the Proton acceptor of the active site. Residue Ser131 is part of the active site. Residue Lys258 coordinates substrate.

This sequence belongs to the peptidase S11 family.

The protein resides in the secreted. It is found in the cell wall. The protein localises to the cell membrane. Its subcellular location is the membrane raft. The catalysed reaction is Preferential cleavage: (Ac)2-L-Lys-D-Ala-|-D-Ala. Also transpeptidation of peptidyl-alanyl moieties that are N-acyl substituents of D-alanine.. The protein operates within cell wall biogenesis; peptidoglycan biosynthesis. Removes C-terminal D-alanyl residues from sugar-peptide cell wall precursors. The sequence is that of D-alanyl-D-alanine carboxypeptidase DacA (dacA) from Bacillus subtilis (strain 168).